Consider the following 62-residue polypeptide: MARYRRRSRSRSRSRYRRRRRRRSRGRRRRTYRRSRRHSRRRRGRRRGYSRRRYSRRGRRRY.

The segment at 1–62 (MARYRRRSRS…RYSRRGRRRY (62 aa)) is disordered.

The protein belongs to the protamine P1 family. In terms of tissue distribution, testis.

It is found in the nucleus. Its subcellular location is the chromosome. Functionally, protamines substitute for histones in the chromatin of sperm during the haploid phase of spermatogenesis. They compact sperm DNA into a highly condensed, stable and inactive complex. The protein is Sperm protamine P1 (PRM1) of Sarcophilus harrisii (Tasmanian devil).